Reading from the N-terminus, the 366-residue chain is tRNA N6-adenosine threonylcarbamoyltransferase (366 aa).

Fe cation-binding residues include His-119 and His-123. Substrate-binding positions include 142 to 146 (LVSGG), Asp-175, Gly-188, Asp-192, and Asn-281. Asp-309 contributes to the Fe cation binding site.

This sequence belongs to the KAE1 / TsaD family. It depends on Fe(2+) as a cofactor.

The protein resides in the cytoplasm. It carries out the reaction L-threonylcarbamoyladenylate + adenosine(37) in tRNA = N(6)-L-threonylcarbamoyladenosine(37) in tRNA + AMP + H(+). Its function is as follows. Required for the formation of a threonylcarbamoyl group on adenosine at position 37 (t(6)A37) in tRNAs that read codons beginning with adenine. Is involved in the transfer of the threonylcarbamoyl moiety of threonylcarbamoyl-AMP (TC-AMP) to the N6 group of A37, together with TsaE and TsaB. TsaD likely plays a direct catalytic role in this reaction. The sequence is that of tRNA N6-adenosine threonylcarbamoyltransferase from Synechococcus sp. (strain JA-3-3Ab) (Cyanobacteria bacterium Yellowstone A-Prime).